The following is a 61-amino-acid chain: Small ribosomal subunit protein uS14 (61 aa).

Residues Cys24, Cys27, Cys40, and Cys43 each coordinate Zn(2+).

Belongs to the universal ribosomal protein uS14 family. Zinc-binding uS14 subfamily. Part of the 30S ribosomal subunit. Contacts proteins S3 and S10. The cofactor is Zn(2+).

In terms of biological role, binds 16S rRNA, required for the assembly of 30S particles and may also be responsible for determining the conformation of the 16S rRNA at the A site. The protein is Small ribosomal subunit protein uS14 of Campylobacter hominis (strain ATCC BAA-381 / DSM 21671 / CCUG 45161 / LMG 19568 / NCTC 13146 / CH001A).